The chain runs to 112 residues: UPF0482 protein SG1468 (112 aa).

Residues 1 to 22 (MNTIPTRCLLGGLLALSLLAYA) form the signal peptide.

The protein belongs to the UPF0482 family.

In Sodalis glossinidius (strain morsitans), this protein is UPF0482 protein SG1468.